The sequence spans 90 residues: UPF0335 protein Smed_2680 (90 aa).

Belongs to the UPF0335 family.

The chain is UPF0335 protein Smed_2680 from Sinorhizobium medicae (strain WSM419) (Ensifer medicae).